A 326-amino-acid polypeptide reads, in one-letter code: 4-hydroxy-3-methylbut-2-enyl diphosphate reductase 1 (326 aa).

Cys27 contacts [4Fe-4S] cluster. Residues His56 and His89 each coordinate (2E)-4-hydroxy-3-methylbut-2-enyl diphosphate. Dimethylallyl diphosphate-binding residues include His56 and His89. His56 and His89 together coordinate isopentenyl diphosphate. Cys111 provides a ligand contact to [4Fe-4S] cluster. His139 is a binding site for (2E)-4-hydroxy-3-methylbut-2-enyl diphosphate. Position 139 (His139) interacts with dimethylallyl diphosphate. His139 serves as a coordination point for isopentenyl diphosphate. Glu141 (proton donor) is an active-site residue. Position 179 (Thr179) interacts with (2E)-4-hydroxy-3-methylbut-2-enyl diphosphate. Cys209 is a [4Fe-4S] cluster binding site. (2E)-4-hydroxy-3-methylbut-2-enyl diphosphate contacts are provided by Ser237, Ser238, Asn239, and Ser281. Residues Ser237, Ser238, Asn239, and Ser281 each contribute to the dimethylallyl diphosphate site. Ser237, Ser238, Asn239, and Ser281 together coordinate isopentenyl diphosphate.

Belongs to the IspH family. Requires [4Fe-4S] cluster as cofactor.

The enzyme catalyses isopentenyl diphosphate + 2 oxidized [2Fe-2S]-[ferredoxin] + H2O = (2E)-4-hydroxy-3-methylbut-2-enyl diphosphate + 2 reduced [2Fe-2S]-[ferredoxin] + 2 H(+). The catalysed reaction is dimethylallyl diphosphate + 2 oxidized [2Fe-2S]-[ferredoxin] + H2O = (2E)-4-hydroxy-3-methylbut-2-enyl diphosphate + 2 reduced [2Fe-2S]-[ferredoxin] + 2 H(+). Its pathway is isoprenoid biosynthesis; dimethylallyl diphosphate biosynthesis; dimethylallyl diphosphate from (2E)-4-hydroxy-3-methylbutenyl diphosphate: step 1/1. It participates in isoprenoid biosynthesis; isopentenyl diphosphate biosynthesis via DXP pathway; isopentenyl diphosphate from 1-deoxy-D-xylulose 5-phosphate: step 6/6. Catalyzes the conversion of 1-hydroxy-2-methyl-2-(E)-butenyl 4-diphosphate (HMBPP) into a mixture of isopentenyl diphosphate (IPP) and dimethylallyl diphosphate (DMAPP). Acts in the terminal step of the DOXP/MEP pathway for isoprenoid precursor biosynthesis. In Burkholderia pseudomallei (strain K96243), this protein is 4-hydroxy-3-methylbut-2-enyl diphosphate reductase 1.